The chain runs to 1792 residues: D-lysergyl-peptide-synthetase subunit 3 (1792 aa).

Residues phenylalanine 239–arginine 642 are adenylation (A) domain. The 75-residue stretch at serine 779 to valine 853 folds into the Carrier domain. Serine 813 bears the O-(pantetheine 4'-phosphoryl)serine mark. The interval glutamate 895 to glutamate 1285 is condensation (C) domain. Positions valine 1415–serine 1640 are reductase (R) domain.

The protein belongs to the NRP synthetase family.

The protein operates within alkaloid biosynthesis; ergot alkaloid biosynthesis. Its function is as follows. D-lysergyl-peptide-synthetase subunit 3; part of the gene cluster that mediates the biosynthesis of fungal ergot alkaloid. DmaW catalyzes the first step of ergot alkaloid biosynthesis by condensing dimethylallyl diphosphate (DMAP) and tryptophan to form 4-dimethylallyl-L-tryptophan. The second step is catalyzed by the methyltransferase easF that methylates 4-dimethylallyl-L-tryptophan in the presence of S-adenosyl-L-methionine, resulting in the formation of 4-dimethylallyl-L-abrine. The catalase easC and the FAD-dependent oxidoreductase easE then transform 4-dimethylallyl-L-abrine to chanoclavine-I which is further oxidized by easD in the presence of NAD(+), resulting in the formation of chanoclavine-I aldehyde. Agroclavine dehydrogenase easG then mediates the conversion of chanoclavine-I aldehyde to agroclavine via a non-enzymatic adduct reaction: the substrate is an iminium intermediate that is formed spontaneously from chanoclavine-I aldehyde in the presence of glutathione. The presence of easA is not required to complete this reaction. Further conversion of agroclavine to paspalic acid is a two-step process involving oxidation of agroclavine to elymoclavine and of elymoclavine to paspalic acid, the second step being performed by the elymoclavine oxidase cloA. Paspalic acid is then further converted to D-lysergic acid. Ergopeptines are assembled from D-lysergic acid and three different amino acids by the D-lysergyl-peptide-synthetases composed each of a monomudular and a trimodular nonribosomal peptide synthetase subunit. LpsB and lpsC encode the monomodular subunits responsible for D-lysergic acid activation and incorporation into the ergopeptine backbone. LpsA1 and A2 subunits encode the trimodular nonribosomal peptide synthetase assembling the tripeptide portion of ergopeptines. LpsA1 is responsible for formation of the major ergopeptine, ergotamine, and lpsA2 for alpha-ergocryptine, the minor ergopeptine of the total alkaloid mixture elaborated by C.purpurea. D-lysergyl-tripeptides are assembled by the nonribosomal peptide synthetases and released as N-(D-lysergyl-aminoacyl)-lactams. Cyclolization of the D-lysergyl-tripeptides is performed by the Fe(2+)/2-ketoglutarate-dependent dioxygenase easH which introduces a hydroxyl group into N-(D-lysergyl-aminoacyl)-lactam at alpha-C of the aminoacyl residue followed by spontaneous condensation with the terminal lactam carbonyl group. This is D-lysergyl-peptide-synthetase subunit 3 from Claviceps purpurea (strain 20.1) (Ergot fungus).